The primary structure comprises 401 residues: Dual-specificity RNA methyltransferase RlmN (401 aa).

Glu114 (proton acceptor) is an active-site residue. Residues 120 to 365 (DKTRGTLCVS…TMVRRTRGDD (246 aa)) form the Radical SAM core domain. The cysteines at positions 127 and 370 are disulfide-linked. Residues Cys134, Cys138, and Cys141 each coordinate [4Fe-4S] cluster. S-adenosyl-L-methionine contacts are provided by residues 187 to 188 (GE), Ser219, 241 to 243 (SLH), and Asn327. Cys370 (S-methylcysteine intermediate) is an active-site residue.

The protein belongs to the radical SAM superfamily. RlmN family. Requires [4Fe-4S] cluster as cofactor.

The protein localises to the cytoplasm. It catalyses the reaction adenosine(2503) in 23S rRNA + 2 reduced [2Fe-2S]-[ferredoxin] + 2 S-adenosyl-L-methionine = 2-methyladenosine(2503) in 23S rRNA + 5'-deoxyadenosine + L-methionine + 2 oxidized [2Fe-2S]-[ferredoxin] + S-adenosyl-L-homocysteine. The catalysed reaction is adenosine(37) in tRNA + 2 reduced [2Fe-2S]-[ferredoxin] + 2 S-adenosyl-L-methionine = 2-methyladenosine(37) in tRNA + 5'-deoxyadenosine + L-methionine + 2 oxidized [2Fe-2S]-[ferredoxin] + S-adenosyl-L-homocysteine. Specifically methylates position 2 of adenine 2503 in 23S rRNA and position 2 of adenine 37 in tRNAs. m2A2503 modification seems to play a crucial role in the proofreading step occurring at the peptidyl transferase center and thus would serve to optimize ribosomal fidelity. The chain is Dual-specificity RNA methyltransferase RlmN from Stenotrophomonas maltophilia (strain K279a).